The sequence spans 236 residues: RING-H2 finger protein ATL7 (236 aa).

A helical membrane pass occupies residues 31–51 (AFIFSVPICFTFIVLFVLYVI). The RING-type; atypical zinc-finger motif lies at 111–153 (CSVCLGDYQAEEKLQQMPSCGHTFHMECIDLWLTSHTTCPLCR). A compositionally biased stretch (polar residues) spans 176-196 (ENSNGGEASTQPDSQSATEAI). A disordered region spans residues 176 to 236 (ENSNGGEAST…SDGCCTCRLG (61 aa)). The span at 197-221 (SHTDDVEEGNRDSQEVSKETEENDR) shows a compositional bias: basic and acidic residues.

It belongs to the RING-type zinc finger family. ATL subfamily.

Its subcellular location is the membrane. The enzyme catalyses S-ubiquitinyl-[E2 ubiquitin-conjugating enzyme]-L-cysteine + [acceptor protein]-L-lysine = [E2 ubiquitin-conjugating enzyme]-L-cysteine + N(6)-ubiquitinyl-[acceptor protein]-L-lysine.. It functions in the pathway protein modification; protein ubiquitination. In Arabidopsis thaliana (Mouse-ear cress), this protein is RING-H2 finger protein ATL7 (ATL7).